A 93-amino-acid polypeptide reads, in one-letter code: Cell division topological specificity factor (93 aa).

The protein belongs to the MinE family.

Its function is as follows. Prevents the cell division inhibition by proteins MinC and MinD at internal division sites while permitting inhibition at polar sites. This ensures cell division at the proper site by restricting the formation of a division septum at the midpoint of the long axis of the cell. In Synechococcus sp. (strain WH7803), this protein is Cell division topological specificity factor.